Reading from the N-terminus, the 483-residue chain is Probable cytosol aminopeptidase (483 aa).

The Mn(2+) site is built by K252 and D257. The active site involves K264. Residues D275, D334, and E336 each contribute to the Mn(2+) site. R338 is a catalytic residue.

The protein belongs to the peptidase M17 family. It depends on Mn(2+) as a cofactor.

The protein localises to the cytoplasm. It carries out the reaction Release of an N-terminal amino acid, Xaa-|-Yaa-, in which Xaa is preferably Leu, but may be other amino acids including Pro although not Arg or Lys, and Yaa may be Pro. Amino acid amides and methyl esters are also readily hydrolyzed, but rates on arylamides are exceedingly low.. The catalysed reaction is Release of an N-terminal amino acid, preferentially leucine, but not glutamic or aspartic acids.. Functionally, presumably involved in the processing and regular turnover of intracellular proteins. Catalyzes the removal of unsubstituted N-terminal amino acids from various peptides. The polypeptide is Probable cytosol aminopeptidase (Legionella pneumophila (strain Paris)).